The sequence spans 394 residues: Elongation factor Tu (394 aa).

In terms of domain architecture, tr-type G spans 10-204 (KPHVNVGTIG…ALDSYIPEPQ (195 aa)). Residues 19-26 (GHVDHGKT) form a G1 region. 19 to 26 (GHVDHGKT) provides a ligand contact to GTP. Residue Thr26 coordinates Mg(2+). The tract at residues 60-64 (GITIN) is G2. The G3 stretch occupies residues 81–84 (DCPG). Residues 81 to 85 (DCPGH) and 136 to 139 (NKCD) contribute to the GTP site. The tract at residues 136 to 139 (NKCD) is G4. The G5 stretch occupies residues 174–176 (SAL).

The protein belongs to the TRAFAC class translation factor GTPase superfamily. Classic translation factor GTPase family. EF-Tu/EF-1A subfamily. Monomer.

The protein localises to the cytoplasm. It catalyses the reaction GTP + H2O = GDP + phosphate + H(+). Its function is as follows. GTP hydrolase that promotes the GTP-dependent binding of aminoacyl-tRNA to the A-site of ribosomes during protein biosynthesis. The chain is Elongation factor Tu from Shewanella baltica (strain OS185).